Here is a 225-residue protein sequence, read N- to C-terminus: MADHMMAMNHSRFQDGTNGLHHPAHRMGMGQFSNHHHHPQQHTFNSLMGEHMHYGPGNINANNSIRHAIVTGNVNGGHPNGSMAPASRFNSPFMGPVPNQGAQLTASMQLQKLNNQYFTHHPYPHNHYIPELHPANQINGTNQHFRDCNPKHSTGMPPSVSHVPAAMLPPSVIDTDFIDEEVLMSLVIEMGLDRIKELPELWLGQNEFDFMTDFVCKQQPNRVSC.

Belongs to the CITED family.

The protein resides in the nucleus. Its function is as follows. Transcriptional coactivator or corepressor of the p300/CBP-mediated transcription complex. May be involved in sex determination, early gonad development, left-right patterning during embryogenesis and differentiation of the adrenal cortex. This is Cbp/p300-interacting transactivator 2 (cited2) from Xenopus tropicalis (Western clawed frog).